The sequence spans 85 residues: uncharacterized protein (85 aa).

Belongs to the SF3B5 family.

This is an uncharacterized protein from Schizosaccharomyces pombe (strain 972 / ATCC 24843) (Fission yeast).